The sequence spans 340 residues: MSNQTPYIGSKISLISKLDIRYEGILYTVDTNDSTIALAKVRSFGTEKRPTANPVAARDDVYEYIIFKASDIKDLIVCDTPKMANIGGGLPYDPAIISVSSRSAPASDGAPAASAGSSRAGTPSRNSPLGQIIQNQRPGRGGYQQNFQANRGYNNYRGGFAGGYNNQRGHNNYGVPRVNHREKLKFESDFDFEKANEKFQEVLVDNLEKLNIEDKAEPEVEEKKDAAFYDKKTSFFDNISCESLEKAEGKTGRPDWKKERETNQETFGHNAVRSLNYRRGFGGRGRGGNRGYGGYNNGYQHQHQHRGGYNGGYRQNNGGYRRGGYAPRDNQGNTAAAAEQ.

The region spanning 1-81 (MSNQTPYIGS…IKDLIVCDTP (81 aa)) is the Sm domain. Positions 101–125 (SRSAPASDGAPAASAGSSRAGTPSR) are enriched in low complexity. A disordered region spans residues 101 to 148 (SRSAPASDGAPAASAGSSRAGTPSRNSPLGQIIQNQRPGRGGYQQNFQ). Residues 126–148 (NSPLGQIIQNQRPGRGGYQQNFQ) are compositionally biased toward polar residues. The region spanning 178–214 (VNHREKLKFESDFDFEKANEKFQEVLVDNLEKLNIED) is the DFDF domain. The FFD box signature appears at 227–243 (AFYDKKTSFFDNISCES). The TFG box signature appears at 251-271 (TGRPDWKKERETNQETFGHNA). Residues 277-340 (YRRGFGGRGR…QGNTAAAAEQ (64 aa)) are disordered. The span at 280 to 296 (GFGGRGRGGNRGYGGYN) shows a compositional bias: gly residues. Residues 312 to 325 (GYRQNNGGYRRGGY) are compositionally biased toward low complexity.

It belongs to the LSM14 family.

The protein resides in the nucleus. Functionally, transcriptional regulator. Involved in modulating embryonic expression of ATP-dependent chaperone cdc-48.1. May play a role in mRNA gene silencing, and RNA granule (P-body) assembly. The chain is Protein LSM14 homolog car-1 from Caenorhabditis elegans.